Reading from the N-terminus, the 327-residue chain is Malate dehydrogenase (327 aa).

NAD(+) is bound at residue 11–17 (GAAGQIA). Substrate contacts are provided by Arg92 and Arg98. Residues Asn105, Gln112, and 128–130 (VGN) contribute to the NAD(+) site. Residues Asn130 and Arg160 each coordinate substrate. The Proton acceptor role is filled by His185.

The protein belongs to the LDH/MDH superfamily. MDH type 2 family.

It catalyses the reaction (S)-malate + NAD(+) = oxaloacetate + NADH + H(+). Functionally, catalyzes the reversible oxidation of malate to oxaloacetate. This Magnetococcus marinus (strain ATCC BAA-1437 / JCM 17883 / MC-1) protein is Malate dehydrogenase.